The primary structure comprises 191 residues: 3-isopropylmalate dehydratase small subunit (191 aa).

It belongs to the LeuD family. LeuD type 1 subfamily. As to quaternary structure, heterodimer of LeuC and LeuD.

The catalysed reaction is (2R,3S)-3-isopropylmalate = (2S)-2-isopropylmalate. Its pathway is amino-acid biosynthesis; L-leucine biosynthesis; L-leucine from 3-methyl-2-oxobutanoate: step 2/4. Functionally, catalyzes the isomerization between 2-isopropylmalate and 3-isopropylmalate, via the formation of 2-isopropylmaleate. The chain is 3-isopropylmalate dehydratase small subunit from Anaeromyxobacter dehalogenans (strain 2CP-1 / ATCC BAA-258).